A 105-amino-acid polypeptide reads, in one-letter code: Met repressor (105 aa).

It belongs to the MetJ family. As to quaternary structure, homodimer.

It localises to the cytoplasm. This regulatory protein, when combined with SAM (S-adenosylmethionine) represses the expression of the methionine regulon and of enzymes involved in SAM synthesis. This Erwinia tasmaniensis (strain DSM 17950 / CFBP 7177 / CIP 109463 / NCPPB 4357 / Et1/99) protein is Met repressor.